The primary structure comprises 127 residues: Small ribosomal subunit protein uS13 (127 aa).

The disordered stretch occupies residues H92–K127. Positions Q101–K127 are enriched in basic residues.

Belongs to the universal ribosomal protein uS13 family. In terms of assembly, part of the 30S ribosomal subunit. Forms a loose heterodimer with protein S19. Forms two bridges to the 50S subunit in the 70S ribosome.

In terms of biological role, located at the top of the head of the 30S subunit, it contacts several helices of the 16S rRNA. In the 70S ribosome it contacts the 23S rRNA (bridge B1a) and protein L5 of the 50S subunit (bridge B1b), connecting the 2 subunits; these bridges are implicated in subunit movement. Contacts the tRNAs in the A and P-sites. The sequence is that of Small ribosomal subunit protein uS13 from Trichodesmium erythraeum (strain IMS101).